We begin with the raw amino-acid sequence, 188 residues long: dCTP deaminase (188 aa).

A dCTP-binding site is contributed by 109 to 114 (KSTYAR). Glutamate 135 functions as the Proton donor/acceptor in the catalytic mechanism. Positions 154, 168, and 178 each coordinate dCTP.

It belongs to the dCTP deaminase family. In terms of assembly, homotrimer.

It catalyses the reaction dCTP + H2O + H(+) = dUTP + NH4(+). It functions in the pathway pyrimidine metabolism; dUMP biosynthesis; dUMP from dCTP (dUTP route): step 1/2. Its function is as follows. Catalyzes the deamination of dCTP to dUTP. The polypeptide is dCTP deaminase (Helicobacter pylori (strain J99 / ATCC 700824) (Campylobacter pylori J99)).